We begin with the raw amino-acid sequence, 325 residues long: Probable cell division protein WhiA (325 aa).

Positions 273–306 form a DNA-binding region, H-T-H motif; sequence SLEELGALADPPLTKDAVAGRIRRLLALADKRAN.

It belongs to the WhiA family.

In terms of biological role, involved in cell division and chromosome segregation. The polypeptide is Probable cell division protein WhiA (Parafrankia sp. (strain EAN1pec)).